The sequence spans 704 residues: MAAAAPAVDGVPGRGPPGEVIHLNVGGKRFSTSRQTLTWIPDSFFSSLLSGRISTLKDETGAIFIDRDPTVFAPILNFLRTKELDPRGVHGSSLLHEAQFYGLTPLVRRLQLLEELDRSSCGNVLFTGYLPPPVFPVKRRNRHSLVGPQQAGGRPAPVRRSNTMPPNLGNAGLLGRMLDEKSPPSPSGLPEEPGMVRLVCGHHNWIAVAYTQFLVCYRLKEASGWQLVFSSPRLDWPIERLALTARVLGGALGEHDKMVAVATGSEILLWALQPEGGGSEIGVFHLGVPVEALFFVGNQLIATSHTGRIGVWNAVTKHWQVQEVQPITSYDAAGSFLLLGCNNGSIYYVDVQKFPLRMKDNDLLVSELYRDPAEDGVTALSVYLTPKTSDSGNWIEIAYGTSSGGVRVIVQHPETVGSGPQLFQTFTVHRSPVTKIMLSEKHLISVCADSNHVRTWSVTRFRGMISTQPGSTPLASFKILALESADGHGGCSAGNDIGPYGERDDQQVFIQKVVPSASQLFVRLSSTGQRVCSVRSVDGSPTTAFTVLECEGSRRLGSRPRRYLLTGQANGSLAMWDLTTAMDGLGQAPAGGLTEEELMEQLEQCDLAPLASSRGSLPSPSPRTSLTSLHSAFSNTSLSSRRGSPSPPQAEARRRGGGSFVERCQELVRSGPEPRRPPTPAPRPSSGLGAPLVPPKTKLNETSF.

Position 2 is an N-acetylalanine (A2). The region spanning 19-88 (EVIHLNVGGK…LRTKELDPRG (70 aa)) is the BTB domain. The segment at 145–165 (LVGPQQAGGRPAPVRRSNTMP) is disordered. Residue T163 is modified to Phosphothreonine. 5 WD repeats span residues 233–280 (RLDW…GGSE), 283–322 (VFHLGVPVEALFFVGNQLIATSHTGRIGVWNAVTKHWQVQ), 324–359 (VQPITSYDAAGSFLLLGCNNGSIYYVDVQKFPLRMK), 428–466 (VHRSPVTKIMLSEKHLISVCADSNHVRTWSVTRFRGMIS), and 548–586 (LECEGSRRLGSRPRRYLLTGQANGSLAMWDLTTAMDGLG). Positions 611-644 (ASSRGSLPSPSPRTSLTSLHSAFSNTSLSSRRGS) are enriched in low complexity. The segment at 611-704 (ASSRGSLPSP…PKTKLNETSF (94 aa)) is disordered. Residues 618-623 (PSPSPR) carry the PXXXPR motif. Phosphoserine is present on residues S644 and S646. The short motif at 678 to 683 (PTPAPR) is the PXXXPR element.

This sequence belongs to the KCTD3 family. As to quaternary structure, monomer. Interacts with CUL3; interaction is direct and forms a 5:5 heterodecamer. Interacts (via PXXXPR motifs) with SH3KBP1 (via SH3 domains). Directly interacts with cathepsin B/CTSB.

It localises to the lysosome. Functionally, inhibits CBL-SH3KBP1 complex mediated down-regulation of EGFR signaling by sequestration of SH3KBP1. Binds to SH3KBP1 and prevents its interaction with CBL and inhibits translocation of SH3KBP1 to EGFR containing vesicles upon EGF stimulation. In Bos taurus (Bovine), this protein is SH3KBP1-binding protein 1 (SHKBP1).